Here is a 320-residue protein sequence, read N- to C-terminus: Metapyrocatechase 2 (320 aa).

2 disordered regions span residues 1–21 (MDTHRADASQRSQAPAARPRH) and 131–153 (GPKTSPSSKSPARLEGAPGGQRG). VOC domains lie at 25 to 131 (SIDH…VKIG) and 167 to 282 (RLSH…YSAD). 3 residues coordinate Fe cation: His-170, His-227, and Glu-278.

This sequence belongs to the extradiol ring-cleavage dioxygenase family. Fe(2+) is required as a cofactor.

The enzyme catalyses catechol + O2 = (2Z,4E)-2-hydroxy-6-oxohexa-2,4-dienoate + H(+). The protein is Metapyrocatechase 2 (mcpII) of Cupriavidus necator (Alcaligenes eutrophus).